The primary structure comprises 417 residues: Gamma-glutamyl phosphate reductase (417 aa).

It belongs to the gamma-glutamyl phosphate reductase family.

The protein localises to the cytoplasm. The enzyme catalyses L-glutamate 5-semialdehyde + phosphate + NADP(+) = L-glutamyl 5-phosphate + NADPH + H(+). It functions in the pathway amino-acid biosynthesis; L-proline biosynthesis; L-glutamate 5-semialdehyde from L-glutamate: step 2/2. Its function is as follows. Catalyzes the NADPH-dependent reduction of L-glutamate 5-phosphate into L-glutamate 5-semialdehyde and phosphate. The product spontaneously undergoes cyclization to form 1-pyrroline-5-carboxylate. The sequence is that of Gamma-glutamyl phosphate reductase from Legionella pneumophila (strain Paris).